A 128-amino-acid chain; its full sequence is Protein C10 (128 aa).

This sequence belongs to the UPF0456 family.

The protein resides in the cytoplasm. This is Protein C10 from Xenopus tropicalis (Western clawed frog).